We begin with the raw amino-acid sequence, 187 residues long: MATTADFKNGLVLKNEGKLQQIIEFQHVKPGKGPAFVRTKLKDVVTGKTIDKTWNAGVKVETATVDRRDVTYLYNDGTSFIVMDDKTFEQYELSPDAFGDAGRFLLENMRVQVSFHEGEALFGELPVSVDLRVEHTDPGLQGDRSTGGTKPATLETGAEIQVPLFIETGNVLKVDTRDGSYLSRVNN.

Belongs to the elongation factor P family.

Its subcellular location is the cytoplasm. Its pathway is protein biosynthesis; polypeptide chain elongation. Functionally, involved in peptide bond synthesis. Stimulates efficient translation and peptide-bond synthesis on native or reconstituted 70S ribosomes in vitro. Probably functions indirectly by altering the affinity of the ribosome for aminoacyl-tRNA, thus increasing their reactivity as acceptors for peptidyl transferase. This is Elongation factor P from Corynebacterium glutamicum (strain R).